A 547-amino-acid polypeptide reads, in one-letter code: MDYIFLITGYKYRHLNLEAYNAKSRAIENEKRYLGNDRNLPFHREREKVESNPNSSDEEDLTSTNNTRSSDNTTSDTEDDSGEDSYQVEWESGKDPLAPKNWPMWKKIYTLLVASFIAIVITANSSIFSDGGGIAAQQYHVGATVGDLCSATFLLGFAAGSVLFAPLSEVYGRLPLYSVTLVIFVVFQIGGGCSKNIWSLVIFRFFHGFFGCTPMSACGGTISDLFNPIQRTGALLVFCAAAFVGPLVGPVMGGYITESKLGWRWDFWINMIWAGLTWVIVCFTMPETHSETLLDFKARYLRKKTNCDKWYNEHEHQRDPAYAIRTALTRGVRLLCTEPIVQAFCMYLVFINILLYICMVGYPLIFYQYGFNAGEVGLAILGILVGILLGLALTPIIYVHYRRRYEMRDGNICPEDRLFPLFFGSFFIPIALFWLGWTCYPSVHWAAPMVSGIFLGWGFLYVLAVCYSYLVDCYHEMAASALSVATFTRYAAGGGMTIVARPMYNNLNYHWATSLLAFVGCGLVPIPFIFFFWGRRIRQRSPHAYKG.

The segment covering 38–50 (RNLPFHREREKVE) has biased composition (basic and acidic residues). The interval 38–89 (RNLPFHREREKVESNPNSSDEEDLTSTNNTRSSDNTTSDTEDDSGEDSYQVE) is disordered. Residues 62-75 (TSTNNTRSSDNTTS) show a composition bias toward low complexity. A run of 12 helical transmembrane segments spans residues 108-128 (IYTL…SSIF), 148-168 (LCSA…APLS), 174-194 (LPLY…GGCS), 197-217 (IWSL…PMSA), 233-253 (GALL…PVMG), 265-285 (WDFW…CFTM), 346-366 (MYLV…PLIF), 377-397 (GLAI…TPII), 418-438 (LFPL…LGWT), 445-465 (WAAP…VLAV), 478-500 (AASA…TIVA), and 514-534 (SLLA…FFWG).

The protein belongs to the major facilitator superfamily. CAR1 family.

The protein localises to the membrane. This is an uncharacterized protein from Schizosaccharomyces pombe (strain 972 / ATCC 24843) (Fission yeast).